Here is a 111-residue protein sequence, read N- to C-terminus: Thioredoxin 2 (111 aa).

The Thioredoxin domain occupies 2-109 (SKGVITITDA…LLSFLDTHLN (108 aa)). A disulfide bridge connects residues C33 and C36.

This sequence belongs to the thioredoxin family.

Its function is as follows. Participates in various redox reactions through the reversible oxidation of its active center dithiol to a disulfide and catalyzes dithiol-disulfide exchange reactions. In Nostoc sp. (strain PCC 7120 / SAG 25.82 / UTEX 2576), this protein is Thioredoxin 2 (trxB).